A 125-amino-acid polypeptide reads, in one-letter code: Probable prefoldin subunit 6 (125 aa).

The protein belongs to the prefoldin subunit beta family. As to quaternary structure, heterohexamer of two PFD-alpha type and four PFD-beta type subunits.

Functionally, binds specifically to cytosolic chaperonin (c-CPN) and transfers target proteins to it. Binds to nascent polypeptide chain and promotes folding in an environment in which there are many competing pathways for nonnative proteins. This Drosophila melanogaster (Fruit fly) protein is Probable prefoldin subunit 6.